The sequence spans 361 residues: Chitinase-3-like protein 1 (361 aa).

The 361-residue stretch at 1–361 folds into the GH18 domain; the sequence is YKLICYYTSW…SAVKDVLAEV (361 aa). Cys5 and Cys30 are disulfide-bonded. The N-linked (GlcNAc...) asparagine glycan is linked to Asn39. Chitin is bound by residues 49–50, 76–79, Tyr120, 183–186, and Arg241; these read EW, GGWN, and LTYD. A disulfide bridge links Cys278 with Cys342. Residues 302–316 form an important for AKT1 activation and IL8 production region; it reads QWVAYDDQESVKNKA. Trp330 contributes to the chitin binding site. The N-linked (GlcNAc...) asparagine glycan is linked to Asn345.

It belongs to the glycosyl hydrolase 18 family. As to quaternary structure, monomer. As to expression, detected in mammary gland.

Its subcellular location is the secreted. It is found in the extracellular space. The protein localises to the cytoplasm. The protein resides in the perinuclear region. It localises to the endoplasmic reticulum. Functionally, carbohydrate-binding lectin with a preference for chitin. Has no chitinase activity. May play a role in tissue remodeling and in the capacity of cells to respond to and cope with changes in their environment. Plays a role in T-helper cell type 2 (Th2) inflammatory response and IL-13-induced inflammation, regulating allergen sensitization, inflammatory cell apoptosis, dendritic cell accumulation and M2 macrophage differentiation. Facilitates invasion of pathogenic enteric bacteria into colonic mucosa and lymphoid organs. Mediates activation of AKT1 signaling pathway and subsequent IL8 production in colonic epithelial cells. Regulates antibacterial responses in lung by contributing to macrophage bacterial killing, controlling bacterial dissemination and augmenting host tolerance. Also regulates hyperoxia-induced injury, inflammation and epithelial apoptosis in lung. This chain is Chitinase-3-like protein 1 (CHI3L1), found in Ovis aries (Sheep).